Reading from the N-terminus, the 330-residue chain is Phosphate acyltransferase (330 aa).

This sequence belongs to the PlsX family. As to quaternary structure, homodimer. Probably interacts with PlsY.

It localises to the cytoplasm. The catalysed reaction is a fatty acyl-[ACP] + phosphate = an acyl phosphate + holo-[ACP]. It functions in the pathway lipid metabolism; phospholipid metabolism. In terms of biological role, catalyzes the reversible formation of acyl-phosphate (acyl-PO(4)) from acyl-[acyl-carrier-protein] (acyl-ACP). This enzyme utilizes acyl-ACP as fatty acyl donor, but not acyl-CoA. This chain is Phosphate acyltransferase, found in Lysinibacillus sphaericus (strain C3-41).